Consider the following 1964-residue polypeptide: MEDRRAERSCEQACASLQRQDYDMALQHCTDALLSLGQYSMADFTGPCPVEVERIKIESLLYRIASFLQLKNYGQADEDCRHVLGEGLAKGERAFRAVLCCMQLKGKLQLVSSILAKSLSGESLNGMVTKDLTRLKTLLTETETATSNVLSGCHVEDLDEGSCNGWHFRPPPRGITSSEEYTLCKRFLEQGICRYGAQCTSAHSQEELAEWQKRYASRLIKLKQQSENKQLSGSYMETLIEKWMSSLSPEKVLSECIEGVQVEHSPDLSVTVNTKKSHQTWTFALTCKPARMLYRVALLYDAHRPHFSIIAISAGDSTTQVSQEVPENCQEWIGGKMAQNGLDHYVYKVGIAFNTEIFGTFRQTIVFDFGLEPVLMQRVMIDAASTEDLEYLMHAKRQLVTTAKRWDSSSKTIVDFEPNETTDLEKSLLIRYQIPLSADQLFTQSVLDKSLTKTNYQARLHDLLYIEEIAQYKEVSRFNLKVQLQILASFMLTGVSGGAKYAQNGQLFGRFKLTETLSEDTLAGRLVMTRVNAVYLLPVPKEKLVQSQGTKEKVYEATIEEKTKDYVFLRISRECCEELSLRPDCDIQVELQFQLNRLPLCEMHYALDRIKDNAVLFPDISMTPTIPWSPNRQWDEQLDPRLNAKQKEAVLAITTPLSIQLPPVLIIGPYGTGKTFTLAQAAKHILQQQETRILICTHSNSAADLYIKDYLHPYVEAGNPQARPLRVYFRNRWVKTVHPVVHQYCLISSTQSTFQMPQKEDILKHRVVVVTLSTSQYLCQLDLEPGFFTHVLLDEAAQAMECETIMPLALATKNTRIVLAGDHMQLSPFVYSEFARERNLHVSLLDRLYEHYPAEFPCRILLCENYRSHEAIINYTSELFYEGKLMASGKQPAHKDFYPLTFFTARGEDVQEKNSTAFYNNAEVFEVVERVEELRRKWPVAWGKLDDGSIGVVTPYADQVFRIRAELRKKRLSDVNVERVLNVQGKQFRVLFLSTVRTRHTCKHKQTPIKKKEQLLEDSTEDLDYGFLSNYKLLNTAITRAQSLVAVVGDPVALCSIGRCRKFWERFIALCHENHSLHGITFEQIKAQLEALELKKTYVLNPLAPEFIPRALRLQHSGNSSRQQQSPPKVKSLYHPQSDHFQSDGIVQPNPSVLIGNPIRAYTPPPPLGPHPNLGKSPSPVQRIDPHTGTSILYVPAVYGGNVVMSVPLPVPWTGYQGRFAVDPRIITHQAAMAYNMNLLHTHGRGSPIPYGLGHHPPVSLGQPQSQHAEKDQQEQNRNGKTDTNNPGPEINKIRTPEKKPTEPKQVDLESNPQNRSPESRPGVVYSNTKFPRKDHLNPRHINNLPLPAPHAQYAIPSRHFHPLPQLPRPPFPASQPHTLLNQQQNNLPEQPNQMAPQPNQVAPQPNQMTPQPNQVAPQPNQVVQQQSQAPPQAPQPAPQLSPAFQAGPTNAFFNNAVAHRPQSPAAEAVGPEQPPPPGLPDGHSPLRAITQPGPILASPLNNFVDESSPGLPIEEALDGVHGSVALETLRQQQARLQQWSEHHAYLSQGGIPYSHHHHPHLPHLPHTPIGLHQPPVRAEWKVAGRADDETETTFSRFQDLLRELSHRDQGDTGELAEMPPPQSRLLQYRQVQPRSPPAVPSPPSSTDHSSQFANFNDSSRDIEVANSPAFPQRLPPQLFGSPFSLPSEHLAPPPLKYLAPEGAWNFANLQQNHLIGPGFPYGLPPLPPRPPQNPFIHIQNHQHAAGQEPFHPLSSRTVSASSLPSLEEYEPRGPGRPLYQRRISSSSAQPCVEEASAPQDSLAQGKESQGHSNPPAFNFPAPESWANTTSSAPYQNIPCNGSSRTSQPRELIAPPKTVKPPEDQLKPESGEVSSSFNYSMLQHLGQFPPLMPNKQIAESANCSSQQSPAGSKPAMSYASALRAPPKPRPPPEQAKKGSDPLSLLQELSLGSSPGSNGFYSYFK.

The segment at 178-206 (SEEYTLCKRFLEQGICRYGAQCTSAHSQE) adopts a C3H1-type zinc-finger fold. Residue Ser-248 is modified to Phosphoserine. ATP is bound at residue 668-675 (GPYGTGKT). The DEAA box motif lies at 794-797 (DEAA). The span at 1116–1127 (HSGNSSRQQQSP) shows a compositional bias: polar residues. Residues 1116 to 1135 (HSGNSSRQQQSPPKVKSLYH) are disordered. Thr-1163 bears the Phosphothreonine mark. The residue at position 1245 (Arg-1245) is an Omega-N-methylarginine. 6 disordered regions span residues 1248-1350 (PIPY…LPAP), 1360-1379 (HFHP…QPHT), 1388-1449 (LPEQ…QAGP), 1463-1491 (QSPA…RAIT), 1631-1655 (QVQP…QFAN), and 1743-1964 (QHAA…SYFK). 2 stretches are compositionally biased toward basic and acidic residues: residues 1268–1281 (HAEK…RNGK) and 1292–1308 (NKIR…KQVD). The segment covering 1365–1374 (PQLPRPPFPA) has biased composition (pro residues). Over residues 1388–1431 (LPEQPNQMAPQPNQVAPQPNQMTPQPNQVAPQPNQVVQQQSQAP) the composition is skewed to low complexity. A compositionally biased stretch (pro residues) spans 1635–1644 (RSPPAVPSPP). A phosphoserine mark is found at Ser-1636, Ser-1760, Ser-1763, and Ser-1788. A compositionally biased stretch (polar residues) spans 1755–1765 (SSRTVSASSLP). Composition is skewed to polar residues over residues 1799-1813 (PQDS…QGHS) and 1826-1849 (WANT…TSQP). Basic and acidic residues predominate over residues 1860–1870 (KPPEDQLKPES). 2 stretches are compositionally biased toward polar residues: residues 1872–1881 (EVSSSFNYSM) and 1897–1910 (IAES…QSPA). Low complexity predominate over residues 1941–1956 (PLSLLQELSLGSSPGS).

The protein belongs to the DNA2/NAM7 helicase family. In terms of assembly, interacts with POLR2A. Interacts with SMYD3; the interaction may bridge SMYD3 and RNA polymerase II. Interacts with SMYD2.

The protein localises to the nucleus. May act as a helicase that plays a role in RNA metabolism in multiple tissues and organs within the developing embryo. This chain is Probable helicase with zinc finger domain (Helz), found in Mus musculus (Mouse).